A 102-amino-acid chain; its full sequence is MSTEYGIALGMIETRGLVPAIEAADAMTKAAEVRLVSREFVGGGYVTVLVRGETGAVNAAVRAGADACERVGDGLVAAHIIARPHKEVEPVLALGNSSPDRS.

One can recognise a BMC domain in the interval 8 to 93 (ALGMIETRGL…PHKEVEPVLA (86 aa)).

Belongs to the bacterial microcompartments protein family. CsoS1 subfamily. As to quaternary structure, homohexamer with a small central pore.

The protein localises to the carboxysome. Its function is as follows. One of shell proteins of the carboxysome, a polyhedral inclusion where RuBisCO (ribulose bisphosphate carboxylase, ccbL-ccbS) is sequestered. Assembles into hexamers which make sheets that form the facets of the polyhedral carboxysome. The shell probably limits the diffusion of CO(2) into and out of the carboxysome. The protein is Carboxysome shell protein CsoS1C of Hydrogenovibrio crunogenus (strain DSM 25203 / XCL-2) (Thiomicrospira crunogena).